Reading from the N-terminus, the 876-residue chain is MAAPALSGDQIRETFLKFFEGKGHRRLPSASLIPEDPTVLLTIAGMLPFKPIFLGQQVAEVPRATTSQKCIRTNDIENVGRTARHHTFFEMLGNFSFGDYFKKEAIAFAWELVTEVFQVPAERLAVSVFEEDDEAFAIWRDQIGVPEARIQRLGAKDNFWASGPTGPCGPCSEIYYDFHPELGNDGLDLEDDSRFIEVYNLVFMQYNRDAAGNLTALEKQNIDTGMGLERMAQVLQGVPNNYETDLIFPIIQAVAAIAQRDYASESESVKVSLKVIGDHLRAVTHLIADGVTASNLGRGYVLRRLIRRVVRHGRLIGIDRPFTAEIAETAIALMAAQYPNLREREAAIKAELTREEQRFLETLERGEKLLAELLAAATDQIRGEDAFVLYDTYGFPLELTQEIAEEKGLTVDLAGFEAAMAAQRQRSQAAHETIDLTVQGSLDRLAEQIHPTEFVGYGDAVATAKVTALLREGQSVEAAEAGDRVQIVLDHTPFYAESGGQVGDRGVLTGESLIVRIEDVQKESGFFVHYGQIERGLLQVGDSVTAQIDRACRRRAQANHTATHLLQAALKLIVDEGISQAGSLVAFDRLRFDFNCPRAVTPEELRQIEDQINQWIAEAHGTVVEVMPIATAKAKGAVAMFGEKYGAEVRVIDVPGVSMELCGGTHVANTAEIGLFKIISEAGVASGVRRIEAVAGPAVLEYLNVRDAVVRDLSDRFKAKPEELSDRVTALQEELKANQKQLTALKAELAIAKSDALVSQAIPVGDAQVLVETLTGVDAAALQTAAERLQQKLGDAGAVVLGSSPEEGKVTLVAAFGPAIIAKGLKAGQFIGGIAKICGGGGGGRPNLAQAGGRDASKLPEAIAAALDQLKTAIAS.

Positions 560, 564, 662, and 666 each coordinate Zn(2+).

It belongs to the class-II aminoacyl-tRNA synthetase family. It depends on Zn(2+) as a cofactor.

It is found in the cytoplasm. It catalyses the reaction tRNA(Ala) + L-alanine + ATP = L-alanyl-tRNA(Ala) + AMP + diphosphate. Its function is as follows. Catalyzes the attachment of alanine to tRNA(Ala) in a two-step reaction: alanine is first activated by ATP to form Ala-AMP and then transferred to the acceptor end of tRNA(Ala). Also edits incorrectly charged Ser-tRNA(Ala) and Gly-tRNA(Ala) via its editing domain. This Synechococcus elongatus (strain ATCC 33912 / PCC 7942 / FACHB-805) (Anacystis nidulans R2) protein is Alanine--tRNA ligase.